The following is a 300-amino-acid chain: PAK4-inhibitor INKA2 (300 aa).

Disordered stretches follow at residues 59–104 (GGTP…SSPK), 178–201 (LEKGGEKGETGGSIEPKGEKGQSR), and 230–288 (KEKP…LEPS). Polar residues predominate over residues 60–73 (GTPTFSCPESSQEQ). Low complexity predominate over residues 93–102 (SSSQPSFDSS). The inka box stretch occupies residues 140–183 (EPDDWTSTLMSRGRNRQPLVLGDNVFADLVGNWLDLPELEKGGE). Over residues 246–256 (GRSKKVKKRSL) the composition is skewed to basic residues.

This sequence belongs to the INKA family. Interacts with PAK4. As to expression, enriched in the nervous system.

Its subcellular location is the nucleus. Functionally, inhibitor of the serine/threonine-protein kinase PAK4. Acts by binding PAK4 in a substrate-like manner, inhibiting the protein kinase activity. The chain is PAK4-inhibitor INKA2 from Mus musculus (Mouse).